The chain runs to 619 residues: Dihydroxy-acid dehydratase (619 aa).

Asp81 lines the Mg(2+) pocket. A [2Fe-2S] cluster-binding site is contributed by Cys122. 2 residues coordinate Mg(2+): Asp123 and Lys124. Residue Lys124 is modified to N6-carboxylysine. Cys195 is a binding site for [2Fe-2S] cluster. A Mg(2+)-binding site is contributed by Glu494. Catalysis depends on Ser520, which acts as the Proton acceptor.

This sequence belongs to the IlvD/Edd family. Homodimer. Requires [2Fe-2S] cluster as cofactor. The cofactor is Mg(2+).

It carries out the reaction (2R)-2,3-dihydroxy-3-methylbutanoate = 3-methyl-2-oxobutanoate + H2O. The catalysed reaction is (2R,3R)-2,3-dihydroxy-3-methylpentanoate = (S)-3-methyl-2-oxopentanoate + H2O. Its pathway is amino-acid biosynthesis; L-isoleucine biosynthesis; L-isoleucine from 2-oxobutanoate: step 3/4. It functions in the pathway amino-acid biosynthesis; L-valine biosynthesis; L-valine from pyruvate: step 3/4. In terms of biological role, functions in the biosynthesis of branched-chain amino acids. Catalyzes the dehydration of (2R,3R)-2,3-dihydroxy-3-methylpentanoate (2,3-dihydroxy-3-methylvalerate) into 2-oxo-3-methylpentanoate (2-oxo-3-methylvalerate) and of (2R)-2,3-dihydroxy-3-methylbutanoate (2,3-dihydroxyisovalerate) into 2-oxo-3-methylbutanoate (2-oxoisovalerate), the penultimate precursor to L-isoleucine and L-valine, respectively. This is Dihydroxy-acid dehydratase from Shewanella putrefaciens (strain CN-32 / ATCC BAA-453).